Here is a 580-residue protein sequence, read N- to C-terminus: NADH-quinone oxidoreductase subunit C/D (580 aa).

Residues 1–171 form an NADH dehydrogenase I subunit C region; sequence MSLDQAIPEA…PPFVLTDRLF (171 aa). The tract at residues 195–580 is NADH dehydrogenase I subunit D; that stretch reads ELMVLNFGPH…IDFVMSDVDR (386 aa).

In the N-terminal section; belongs to the complex I 30 kDa subunit family. This sequence in the C-terminal section; belongs to the complex I 49 kDa subunit family. In terms of assembly, NDH-1 is composed of 13 different subunits. Subunits NuoB, CD, E, F, and G constitute the peripheral sector of the complex.

Its subcellular location is the cell inner membrane. The enzyme catalyses a quinone + NADH + 5 H(+)(in) = a quinol + NAD(+) + 4 H(+)(out). Functionally, NDH-1 shuttles electrons from NADH, via FMN and iron-sulfur (Fe-S) centers, to quinones in the respiratory chain. The immediate electron acceptor for the enzyme in this species is believed to be ubiquinone. Couples the redox reaction to proton translocation (for every two electrons transferred, four hydrogen ions are translocated across the cytoplasmic membrane), and thus conserves the redox energy in a proton gradient. The polypeptide is NADH-quinone oxidoreductase subunit C/D (Cereibacter sphaeroides (strain KD131 / KCTC 12085) (Rhodobacter sphaeroides)).